Here is a 919-residue protein sequence, read N- to C-terminus: Coiled-coil domain-containing protein 66 (919 aa).

Disordered stretches follow at residues 145–166, 456–505, 724–744, and 762–816; these read KEETSQDSLHLNNTSNQPKDEN, ERDR…RERE, ERNNPGHLSQNRGTSPVLPSP, and LKSD…EPSH. Residues 150-161 are compositionally biased toward polar residues; the sequence is QDSLHLNNTSNQ. The stretch at 467–558 forms a coiled coil; sequence HQKAITAQVE…EQRIRELAQK (92 aa). The tract at residues 570–919 is mediates localization to cilia, centrosomes and spindle microtubules and the interaction with PCM1, CEP290, CEP104 and CSPP1; it reads GGYGLDDVSG…NQEENFNSSF (350 aa).

In terms of assembly, homodimer; disulfide-linked. Interacts with CEP290. Interacts with PCM1. Interacts with ARMC9, TOGARAM1, CSPP1 and CEP104. Interacts with CDK5RAP2, CEP152, CEP192, TBG1 and PRC1. As to expression, expressed in retina and blood. Expressed in retina, mainly in photoreceptors but also in outer plexiform and ganglion cell layers (at protein level).

It is found in the cytoplasm. Its subcellular location is the cytoskeleton. The protein resides in the microtubule organizing center. It localises to the centrosome. The protein localises to the centriolar satellite. It is found in the cell projection. Its subcellular location is the cilium. The protein resides in the cilium basal body. It localises to the cilium axoneme. The protein localises to the photoreceptor inner segment. It is found in the photoreceptor outer segment. Functionally, microtubule-binding protein required for ciliogenesis. May function in ciliogenesis by mediating the transport of proteins like BBS4 to the cilium, but also through the organization of the centriolar satellites. Required for the assembly of signaling-competent cilia with proper structure and length. Mediates this function in part by regulating transition zone assembly and basal body recruitment of the IFT-B complex. Cooperates with the ciliopathy proteins CSPP1 and CEP104 during cilium length regulation. Plays two important roles during cell division. First, is required for mitotic progression via regulation of spindle assembly, organization and orientation, levels of spindle microtubules (MTs), kinetochore-fiber integrity, and chromosome alignment. Second, functions during cytokinesis in part by regulating assembly and organization of central spindle and midbody MTs. Plays a role in retina morphogenesis and/or homeostasis. The protein is Coiled-coil domain-containing protein 66 (CCDC66) of Canis lupus familiaris (Dog).